Consider the following 232-residue polypeptide: 5'-methylthioadenosine/S-adenosylhomocysteine nucleosidase (232 aa).

Glu12 serves as the catalytic Proton acceptor. Residues Gly78, Met153, and 174-175 (ME) each bind substrate. The active-site Proton donor is Asp198.

It belongs to the PNP/UDP phosphorylase family. MtnN subfamily.

The catalysed reaction is S-adenosyl-L-homocysteine + H2O = S-(5-deoxy-D-ribos-5-yl)-L-homocysteine + adenine. It catalyses the reaction S-methyl-5'-thioadenosine + H2O = 5-(methylsulfanyl)-D-ribose + adenine. It carries out the reaction 5'-deoxyadenosine + H2O = 5-deoxy-D-ribose + adenine. It functions in the pathway amino-acid biosynthesis; L-methionine biosynthesis via salvage pathway; S-methyl-5-thio-alpha-D-ribose 1-phosphate from S-methyl-5'-thioadenosine (hydrolase route): step 1/2. Catalyzes the irreversible cleavage of the glycosidic bond in both 5'-methylthioadenosine (MTA) and S-adenosylhomocysteine (SAH/AdoHcy) to adenine and the corresponding thioribose, 5'-methylthioribose and S-ribosylhomocysteine, respectively. Also cleaves 5'-deoxyadenosine, a toxic by-product of radical S-adenosylmethionine (SAM) enzymes, into 5-deoxyribose and adenine. In Anoxybacillus flavithermus (strain DSM 21510 / WK1), this protein is 5'-methylthioadenosine/S-adenosylhomocysteine nucleosidase.